We begin with the raw amino-acid sequence, 163 residues long: Nucleotide-binding protein Asuc_2113 (163 aa).

The protein belongs to the YajQ family.

Functionally, nucleotide-binding protein. This chain is Nucleotide-binding protein Asuc_2113, found in Actinobacillus succinogenes (strain ATCC 55618 / DSM 22257 / CCUG 43843 / 130Z).